Reading from the N-terminus, the 583-residue chain is Glycine--tRNA ligase (583 aa).

Positions 100 and 166 each coordinate substrate. ATP is bound by residues R198–E200, V208–F213, E328–V329, and G443–R446. Residue F213 to E217 participates in substrate binding. Residue E439–G443 coordinates substrate.

The protein belongs to the class-II aminoacyl-tRNA synthetase family.

Its subcellular location is the cytoplasm. It catalyses the reaction tRNA(Gly) + glycine + ATP = glycyl-tRNA(Gly) + AMP + diphosphate. In terms of biological role, catalyzes the attachment of glycine to tRNA(Gly). This chain is Glycine--tRNA ligase, found in Aeropyrum pernix (strain ATCC 700893 / DSM 11879 / JCM 9820 / NBRC 100138 / K1).